A 385-amino-acid chain; its full sequence is Homoserine O-succinyltransferase (385 aa).

The region spanning 45 to 355 is the AB hydrolase-1 domain; sequence NAVLVCHALN…PHGHDAFLLD (311 aa). Ser151 (nucleophile) is an active-site residue. Arg221 contacts substrate. Active-site residues include Asp316 and His349. Asp350 is a substrate binding site.

It belongs to the AB hydrolase superfamily. MetX family. Homodimer.

It localises to the cytoplasm. The enzyme catalyses L-homoserine + succinyl-CoA = O-succinyl-L-homoserine + CoA. Its pathway is amino-acid biosynthesis; L-methionine biosynthesis via de novo pathway; O-succinyl-L-homoserine from L-homoserine: step 1/1. Transfers a succinyl group from succinyl-CoA to L-homoserine, forming succinyl-L-homoserine. This Janthinobacterium sp. (strain Marseille) (Minibacterium massiliensis) protein is Homoserine O-succinyltransferase.